Here is a 447-residue protein sequence, read N- to C-terminus: Methionine aminopeptidase 2-2 (447 aa).

The segment at 1 to 89 (MAAQTAPELA…PRIPLTTLFP (89 aa)) is disordered. Positions 15–30 (NKNSGSAEANVVSNGG) are enriched in polar residues. Acidic residues predominate over residues 34 to 47 (DDAENEGDSDDDKD). Over residues 59 to 73 (KKKKKKRSKKKKKAA) the composition is skewed to basic residues. His197 contacts substrate. A divalent metal cation contacts are provided by Asp217, Asp228, and His297. His305 lines the substrate pocket. Residues Glu333 and Glu428 each coordinate a divalent metal cation.

It belongs to the peptidase M24A family. Methionine aminopeptidase eukaryotic type 2 subfamily. The cofactor is Co(2+). Requires Zn(2+) as cofactor. It depends on Mn(2+) as a cofactor. Fe(2+) serves as cofactor.

The protein resides in the cytoplasm. It carries out the reaction Release of N-terminal amino acids, preferentially methionine, from peptides and arylamides.. Its function is as follows. Cotranslationally removes the N-terminal methionine from nascent proteins. The N-terminal methionine is often cleaved when the second residue in the primary sequence is small and uncharged (Met-Ala-, Cys, Gly, Pro, Ser, Thr, or Val). The sequence is that of Methionine aminopeptidase 2-2 from Arthroderma otae (strain ATCC MYA-4605 / CBS 113480) (Microsporum canis).